Reading from the N-terminus, the 346-residue chain is UDP-N-acetylenolpyruvoylglucosamine reductase (346 aa).

Positions 22–194 constitute an FAD-binding PCMH-type domain; sequence GFDVRARFAC…TSVTFRLPKV (173 aa). Arginine 170 is an active-site residue. Serine 246 serves as the catalytic Proton donor. Glutamate 342 is an active-site residue.

It belongs to the MurB family. Requires FAD as cofactor.

The protein resides in the cytoplasm. It carries out the reaction UDP-N-acetyl-alpha-D-muramate + NADP(+) = UDP-N-acetyl-3-O-(1-carboxyvinyl)-alpha-D-glucosamine + NADPH + H(+). It participates in cell wall biogenesis; peptidoglycan biosynthesis. In terms of biological role, cell wall formation. This is UDP-N-acetylenolpyruvoylglucosamine reductase from Paraburkholderia xenovorans (strain LB400).